A 108-amino-acid chain; its full sequence is Small ribosomal subunit protein uS17 (108 aa).

Belongs to the universal ribosomal protein uS17 family. In terms of assembly, part of the 30S ribosomal subunit.

In terms of biological role, one of the primary rRNA binding proteins, it binds specifically to the 5'-end of 16S ribosomal RNA. The protein is Small ribosomal subunit protein uS17 of Methanoculleus marisnigri (strain ATCC 35101 / DSM 1498 / JR1).